Consider the following 209-residue polypeptide: Ribosomal RNA large subunit methyltransferase E (209 aa).

S-adenosyl-L-methionine contacts are provided by G63, W65, D83, D99, and D124. The Proton acceptor role is filled by K164.

Belongs to the class I-like SAM-binding methyltransferase superfamily. RNA methyltransferase RlmE family.

The protein resides in the cytoplasm. It carries out the reaction uridine(2552) in 23S rRNA + S-adenosyl-L-methionine = 2'-O-methyluridine(2552) in 23S rRNA + S-adenosyl-L-homocysteine + H(+). In terms of biological role, specifically methylates the uridine in position 2552 of 23S rRNA at the 2'-O position of the ribose in the fully assembled 50S ribosomal subunit. This chain is Ribosomal RNA large subunit methyltransferase E, found in Aliivibrio fischeri (strain ATCC 700601 / ES114) (Vibrio fischeri).